A 137-amino-acid polypeptide reads, in one-letter code: Small ribosomal subunit protein uS12 (137 aa).

Positions 1–44 (MPTINQLVRKGRKSRTSKSDAPALNFGYNSMKKKATDNPAPQKR) are disordered. A 3-methylthioaspartic acid modification is found at D102.

Belongs to the universal ribosomal protein uS12 family. In terms of assembly, part of the 30S ribosomal subunit. Contacts proteins S8 and S17. May interact with IF1 in the 30S initiation complex.

Functionally, with S4 and S5 plays an important role in translational accuracy. Interacts with and stabilizes bases of the 16S rRNA that are involved in tRNA selection in the A site and with the mRNA backbone. Located at the interface of the 30S and 50S subunits, it traverses the body of the 30S subunit contacting proteins on the other side and probably holding the rRNA structure together. The combined cluster of proteins S8, S12 and S17 appears to hold together the shoulder and platform of the 30S subunit. The polypeptide is Small ribosomal subunit protein uS12 (Latilactobacillus sakei subsp. sakei (strain 23K) (Lactobacillus sakei subsp. sakei)).